The following is a 556-amino-acid chain: Genetic interactor of prohibitins 3, mitochondrial (556 aa).

The N-terminal 21 residues, 1 to 21 (MLNLCHALRGVRQFSCSVIVK), are a transit peptide targeting the mitochondrion. Positions 113–305 (ESTLNDILNY…LFDLPGYSTS (193 aa)) constitute a CP-type G domain.

The protein belongs to the TRAFAC class YlqF/YawG GTPase family. GEP3 subfamily.

The protein resides in the mitochondrion. Its function is as follows. Interacts genetically with prohibitins and thus may be involved in the mitochondrial lipid metabolism. In Saccharomyces cerevisiae (strain YJM789) (Baker's yeast), this protein is Genetic interactor of prohibitins 3, mitochondrial (GEP3).